The following is a 367-amino-acid chain: Succinyl-diaminopimelate desuccinylase (367 aa).

His-67 lines the Zn(2+) pocket. Asp-69 is an active-site residue. Asp-98 is a binding site for Zn(2+). Catalysis depends on Glu-128, which acts as the Proton acceptor. Zn(2+) contacts are provided by Glu-129, Glu-157, and His-342.

The protein belongs to the peptidase M20A family. DapE subfamily. As to quaternary structure, homodimer. Zn(2+) serves as cofactor. Requires Co(2+) as cofactor.

It catalyses the reaction N-succinyl-(2S,6S)-2,6-diaminopimelate + H2O = (2S,6S)-2,6-diaminopimelate + succinate. It functions in the pathway amino-acid biosynthesis; L-lysine biosynthesis via DAP pathway; LL-2,6-diaminopimelate from (S)-tetrahydrodipicolinate (succinylase route): step 3/3. In terms of biological role, catalyzes the hydrolysis of N-succinyl-L,L-diaminopimelic acid (SDAP), forming succinate and LL-2,6-diaminopimelate (DAP), an intermediate involved in the bacterial biosynthesis of lysine and meso-diaminopimelic acid, an essential component of bacterial cell walls. The protein is Succinyl-diaminopimelate desuccinylase of Campylobacter hominis (strain ATCC BAA-381 / DSM 21671 / CCUG 45161 / LMG 19568 / NCTC 13146 / CH001A).